The following is a 268-amino-acid chain: Tryptophan synthase alpha chain (268 aa).

Active-site proton acceptor residues include glutamate 49 and aspartate 60.

The protein belongs to the TrpA family. In terms of assembly, tetramer of two alpha and two beta chains.

It catalyses the reaction (1S,2R)-1-C-(indol-3-yl)glycerol 3-phosphate + L-serine = D-glyceraldehyde 3-phosphate + L-tryptophan + H2O. Its pathway is amino-acid biosynthesis; L-tryptophan biosynthesis; L-tryptophan from chorismate: step 5/5. The alpha subunit is responsible for the aldol cleavage of indoleglycerol phosphate to indole and glyceraldehyde 3-phosphate. In Escherichia coli O157:H7, this protein is Tryptophan synthase alpha chain.